The chain runs to 197 residues: MTTLKQTPSQTVGPYFAYGLCPQQYGYDLKSLFTPTIAAPHADGEHVLLVGQVFDGDGNVVSDAMLEFTQVDGAGRFPASRDDVAKSGFTGFARVGTGTDAQHRFVVETVKPGRIAADEAPHINVTVMMRGILTHAFTRVYFDDEAAANAADPVLNLVPAERRATLVAKRDAQPGRPVVYRFDVRMQGPDETVFFDV.

Arg-130 serves as a coordination point for 3,4-dihydroxybenzoate.

Belongs to the intradiol ring-cleavage dioxygenase family. The enzyme is an oligomer of 12 copies of the alpha and beta chains. Fe(3+) serves as cofactor.

It carries out the reaction 3,4-dihydroxybenzoate + O2 = 3-carboxy-cis,cis-muconate + 2 H(+). It functions in the pathway aromatic compound metabolism; beta-ketoadipate pathway; 3-carboxy-cis,cis-muconate from 3,4-dihydroxybenzoate: step 1/1. Its function is as follows. Plays an essential role in the utilization of numerous aromatic and hydroaromatic compounds via the beta-ketoadipate pathway. The chain is Protocatechuate 3,4-dioxygenase alpha chain (pcaG) from Burkholderia cepacia (Pseudomonas cepacia).